Here is a 770-residue protein sequence, read N- to C-terminus: Signal transducer and activator of transcription 3 (770 aa).

At Ala-2 the chain carries N-acetylalanine. Residues Lys-49 and Lys-87 each carry the N6-acetyllysine modification. The Essential for nuclear import signature appears at 150 to 162; sequence DVRKRVQDLEQKM. One can recognise an SH2 domain in the interval 580–670; sequence WNEGYIMGFI…DATNILVSPL (91 aa). Lys-601, Lys-615, and Lys-631 each carry allysine; alternate. Lys-601, Lys-615, and Lys-631 each carry N6-acetyllysine; alternate. A Phosphotyrosine; by TYK2 modification is found at Tyr-640. Position 685 is an allysine; alternate (Lys-685). Lys-685 is subject to N6-acetyllysine; alternate. Pro-704 is modified (phosphotyrosine). Tyr-705 carries the phosphotyrosine; by FER and PTK6 modification. Lys-707 is subject to N6-acetyllysine. Phosphothreonine is present on Thr-714. Ser-727 bears the Phosphoserine; by DYRK2, NLK, NEK6, IRAK1, RPS6KA5, ZIPK/DAPK3 and PKC/PRKCE mark.

This sequence belongs to the transcription factor STAT family. In terms of assembly, forms a homodimer or a heterodimer with a related family member (at least STAT1). Component of a promoter-binding complex composed of STAT3, NFATC3 and NFATC4; complex formation is enhanced by calcineurin. Interacts with IL31RA, NCOA1, PELP1, SIPAR, SOCS7, STATIP1 and TMF1. Interacts with IL23R in presence of IL23. Interacts (via SH2 domain) with NLK. Interacts with ARL2BP; the interaction is enhanced by LIF and JAK1 expression. Interacts with KPNA4 and KPNA5; KPNA4 may be the primary mediator of nuclear import. Interacts with CAV2; the interaction is increased on insulin-induced tyrosine phosphorylation of CAV2 and leads to STAT3 activation. Interacts with ARL2BP; interaction is enhanced with ARL2. Interacts with NEK6. Binds to CDK9 when activated and nuclear. Interacts with BMX. Interacts with ZIPK/DAPK3. Interacts with PIAS3; the interaction occurs on stimulation by IL6, CNTF or OSM and inhibits the DNA binding activity of STAT3. In prostate cancer cells, interacts with PRKCE and promotes DNA binding activity of STAT3. Interacts with STMN3, antagonizing its microtubule-destabilizing activity. Interacts with the 'Lys-129' acetylated form of BIRC5/survivin. Interacts with FER. Interacts (via SH2 domain) with EIF2AK2/PKR (via the kinase catalytic domain). Interacts with INPP5F; the interaction is independent of STAT3 Tyr-705 phosphorylation status. Interacts with FGFR4. Interacts with OCIAD1. Interacts with OCIAD2. Interacts (unphosphorylated or phosphorylated at Ser-727) with PHB1. Interacts and may form heterodimers with NHLH1. Found in a complex with SLC39A6, SLC39A10 and with the 'Ser-727' phosphorylated form of STAT3 throughout mitosis. Interacts (when phosphorylated at Tyr-705) with CD274/PD-L1; promoting nuclear translocation of CD274/PD-L1. Interacts (when acetylated) with EP300 (via bromo domain); interaction takes place following STAT3 acetylation by EP300 and promotes enhanceosome assembly. Interacts (when acetylated) with BRD2 (via bromo domain); interaction promotes STAT3 recruitment to chromatin and T-helper Th17 cell differentiation. Interacts with FAM220A/SIPAR; the interaction occurs in both the nucleus and the cytoplasm, is enhanced by IL6 and promotes STAT3 dephosphorylation. Interacts in both unphosphorylated and phosphorylated forms with FAM220A but interacts preferentially in the phosphorylated form in the nucleus. Interacts with PTPN2; the interaction is promoted by FAM220A and leads to STAT3 dephosphorylation which negatively regulates STAT3 transcriptional activator activity. As to quaternary structure, (Microbial infection) Interacts with HCV core protein. (Microbial infection) Interacts with S.typhimurium SarA. In terms of assembly, (Microbial infection) Interacts with human cytomegalovirus (HHV-5) immediate early protein IE1; this interaction leads to STAT3 nuclear accumulation and disruption of IL6-induced STAT3 phosphorylation. In terms of processing, tyrosine phosphorylated upon stimulation with EGF. Tyrosine phosphorylated in response to constitutively activated FGFR1, FGFR2, FGFR3 and FGFR4. Activated through tyrosine phosphorylation by BMX. Tyrosine phosphorylated in response to IL6, IL11, LIF, CNTF, KITLG/SCF, CSF1, EGF, PDGF, IFN-alpha, LEP and OSM. Activated KIT promotes phosphorylation on tyrosine residues and subsequent translocation to the nucleus. Phosphorylated on serine upon DNA damage, probably by ATM or ATR. Serine phosphorylation is important for the formation of stable DNA-binding STAT3 homodimers and maximal transcriptional activity. ARL2BP may participate in keeping the phosphorylated state of STAT3 within the nucleus. Upon LPS challenge, phosphorylated within the nucleus by IRAK1. Upon erythropoietin treatment, phosphorylated on Ser-727 by RPS6KA5. Dephosphorylation on tyrosine residues by PTPN2 negatively regulates IL6/interleukin-6 signaling. Phosphorylation at Tyr-705 by PTK6, isoform M2 of PKM (PKM2) or FER leads to an increase of its transcriptional activity. Phosphorylation at Tyr-705 is increased in the presence of calcineurin. Phosphorylation at Tyr-640 by TYK2 negatively regulates transcriptional activity. Post-translationally, acetylated on lysine residues by EP300/p300, promoting its activation. Acetylation at Lys-49 and Lys-87 by EP300/p300 promotes its activation. Acetylation at Lys-87 by EP300/p300 promotes its association with BRD2 and recruitment to chromatin. Deacetylated at Lys-49 and Lys-87 by HDAC1. Acetylation at Lys-685 by EP300/p300 promotes its homodimerization and activation. Deacetylated at Lys-685 by HDAC3. Acetylated on lysine residues by CREBBP. Deacetylation by LOXL3 leads to disrupt STAT3 dimerization and inhibit STAT3 transcription activity. Oxidation of lysine residues to allysine on STAT3 preferentially takes place on lysine residues that are acetylated. Some lysine residues are oxidized to allysine by LOXL3, leading to disrupt STAT3 dimerization and inhibit STAT3 transcription activity. Oxidation of lysine residues to allysine on STAT3 preferentially takes place on lysine residues that are acetylated. In terms of processing, (Microbial infection) Phosphorylated on Tyr-705 in the presence of S.typhimurium SarA. In terms of tissue distribution, heart, brain, placenta, lung, liver, skeletal muscle, kidney and pancreas. Expressed in naive CD4(+) T cells as well as T-helper Th17, Th1 and Th2 cells.

It localises to the cytoplasm. The protein localises to the nucleus. Its function is as follows. Signal transducer and transcription activator that mediates cellular responses to interleukins, KITLG/SCF, LEP and other growth factors. Once activated, recruits coactivators, such as NCOA1 or MED1, to the promoter region of the target gene. May mediate cellular responses to activated FGFR1, FGFR2, FGFR3 and FGFR4. Upon activation of IL6ST/gp130 signaling by interleukin-6 (IL6), binds to the IL6-responsive elements identified in the promoters of various acute-phase protein genes. Activated by IL31 through IL31RA. Acts as a regulator of inflammatory response by regulating differentiation of naive CD4(+) T-cells into T-helper Th17 or regulatory T-cells (Treg): acetylation promotes its transcription activity and cell differentiation while deacetylation and oxidation of lysine residues by LOXL3 inhibits differentiation. Involved in cell cycle regulation by inducing the expression of key genes for the progression from G1 to S phase, such as CCND1. Mediates the effects of LEP on melanocortin production, body energy homeostasis and lactation. May play an apoptotic role by transctivating BIRC5 expression under LEP activation. Cytoplasmic STAT3 represses macroautophagy by inhibiting EIF2AK2/PKR activity. Plays a crucial role in basal beta cell functions, such as regulation of insulin secretion. Following JAK/STAT signaling activation and as part of a complex with NFATC3 and NFATC4, binds to the alpha-beta E4 promoter region of CRYAB and activates transcription in cardiomyocytes. The chain is Signal transducer and activator of transcription 3 from Homo sapiens (Human).